The sequence spans 234 residues: Golgi SNAP receptor complex member 1 (234 aa).

Residues 1–212 (MSETWEALRK…MQKIKTKKQK (212 aa)) are Cytoplasmic-facing. Positions 54–121 (VTTEIEGLIE…RDNVDQVLQR (68 aa)) form a coiled coil. Residues 213–233 (NTMILAGVISACLIFTIFWII) form a helical; Anchor for type IV membrane protein membrane-spanning segment. A topological domain (vesicular) is located at residue N234.

This sequence belongs to the GOSR1 family. Component of several multiprotein Golgi SNARE complexes.

The protein resides in the golgi apparatus membrane. In terms of biological role, involved in transport from the ER to the Golgi apparatus as well as in intra-Golgi transport. It belongs to a super-family of proteins called t-SNAREs or soluble NSF (N-ethylmaleimide-sensitive factor) attachment protein receptor. Cooperates with ykt-6 for proper expression of Golgi-resident proteins. Required along with ykt-6 for normal embryonic development, seam cell division or differentiation, and ray formation. The sequence is that of Golgi SNAP receptor complex member 1 from Caenorhabditis briggsae.